Reading from the N-terminus, the 179-residue chain is Iron sulfur cluster assembly protein 1, mitochondrial (179 aa).

The disordered stretch occupies residues 160-179 (RSVKQPTLGPEAAQAETIAT).

This sequence belongs to the NifU family. As to quaternary structure, component of the core Fe-S cluster (ISC) assembly machinery. The cofactor is [2Fe-2S] cluster.

The protein localises to the mitochondrion matrix. It functions in the pathway cofactor biosynthesis; iron-sulfur cluster biosynthesis. Its function is as follows. Scaffold protein for the de novo synthesis of iron-sulfur (Fe-S) clusters within mitochondria, which is required for maturation of both mitochondrial and cytoplasmic [2Fe-2S] and [4Fe-4S] proteins. First, a [2Fe-2S] cluster is transiently assembled on the scaffold protein ISU1. In a second step, the cluster is released from ISU1, transferred to a glutaredoxin, followed by the formation of mitochondrial [2Fe-2S] proteins, the synthesis of [4Fe-4S] clusters and their target-specific insertion into the recipient apoproteins. Cluster assembly on ISU1 depends on the function of the cysteine desulfurase complex NFS1-ISD11, which serves as the sulfur donor for cluster synthesis, the iron-binding protein frataxin as the putative iron donor, and the electron transfer chain comprised of ferredoxin reductase and ferredoxin, which receive their electrons from NADH. The chain is Iron sulfur cluster assembly protein 1, mitochondrial (ISU1) from Debaryomyces hansenii (strain ATCC 36239 / CBS 767 / BCRC 21394 / JCM 1990 / NBRC 0083 / IGC 2968) (Yeast).